A 698-amino-acid polypeptide reads, in one-letter code: Polyribonucleotide nucleotidyltransferase (698 aa).

Mg(2+)-binding residues include Asp485 and Asp491. The 60-residue stretch at 552–611 folds into the KH domain; the sequence is PRITTIKINPEKIRDVIGKGGAVIRALTEETGTTIELDDDGTVKIASSNGEATKEAIRRI. Residues 621 to 689 enclose the S1 motif domain; it reads GRVYNGKVIR…RQGRVRLSIK (69 aa).

It belongs to the polyribonucleotide nucleotidyltransferase family. In terms of assembly, component of the RNA degradosome, which is a multiprotein complex involved in RNA processing and mRNA degradation. Mg(2+) is required as a cofactor.

It is found in the cytoplasm. It carries out the reaction RNA(n+1) + phosphate = RNA(n) + a ribonucleoside 5'-diphosphate. Involved in mRNA degradation. Catalyzes the phosphorolysis of single-stranded polyribonucleotides processively in the 3'- to 5'-direction. This is Polyribonucleotide nucleotidyltransferase from Shewanella denitrificans (strain OS217 / ATCC BAA-1090 / DSM 15013).